The chain runs to 61 residues: DNA gyrase inhibitor YacG (61 aa).

Zn(2+)-binding residues include Cys14, Cys17, Cys29, and Cys33.

This sequence belongs to the DNA gyrase inhibitor YacG family. As to quaternary structure, interacts with GyrB. It depends on Zn(2+) as a cofactor.

Functionally, inhibits all the catalytic activities of DNA gyrase by preventing its interaction with DNA. Acts by binding directly to the C-terminal domain of GyrB, which probably disrupts DNA binding by the gyrase. In Zymomonas mobilis subsp. mobilis (strain ATCC 31821 / ZM4 / CP4), this protein is DNA gyrase inhibitor YacG.